The primary structure comprises 247 residues: Leucyl/phenylalanyl-tRNA--protein transferase (247 aa).

This sequence belongs to the L/F-transferase family.

It is found in the cytoplasm. The enzyme catalyses N-terminal L-lysyl-[protein] + L-leucyl-tRNA(Leu) = N-terminal L-leucyl-L-lysyl-[protein] + tRNA(Leu) + H(+). The catalysed reaction is N-terminal L-arginyl-[protein] + L-leucyl-tRNA(Leu) = N-terminal L-leucyl-L-arginyl-[protein] + tRNA(Leu) + H(+). It carries out the reaction L-phenylalanyl-tRNA(Phe) + an N-terminal L-alpha-aminoacyl-[protein] = an N-terminal L-phenylalanyl-L-alpha-aminoacyl-[protein] + tRNA(Phe). Functionally, functions in the N-end rule pathway of protein degradation where it conjugates Leu, Phe and, less efficiently, Met from aminoacyl-tRNAs to the N-termini of proteins containing an N-terminal arginine or lysine. In Solidesulfovibrio magneticus (strain ATCC 700980 / DSM 13731 / RS-1) (Desulfovibrio magneticus), this protein is Leucyl/phenylalanyl-tRNA--protein transferase.